Reading from the N-terminus, the 177-residue chain is Large ribosomal subunit protein uL6 (177 aa).

Belongs to the universal ribosomal protein uL6 family. As to quaternary structure, part of the 50S ribosomal subunit.

Functionally, this protein binds to the 23S rRNA, and is important in its secondary structure. It is located near the subunit interface in the base of the L7/L12 stalk, and near the tRNA binding site of the peptidyltransferase center. This chain is Large ribosomal subunit protein uL6, found in Methanothermobacter thermautotrophicus (strain ATCC 29096 / DSM 1053 / JCM 10044 / NBRC 100330 / Delta H) (Methanobacterium thermoautotrophicum).